A 332-amino-acid chain; its full sequence is L-lactate dehydrogenase A chain (332 aa).

Position 2 is an N-acetylalanine (Ala-2). Lys-5 carries the N6-acetyllysine; alternate modification. An N6-succinyllysine; alternate modification is found at Lys-5. Position 14 is an N6-acetyllysine (Lys-14). Position 29–57 (29–57 (GAVGMACAISILMKDLADELALVDVMEDK)) interacts with NAD(+). Position 57 is an N6-acetyllysine; alternate (Lys-57). Lys-57 participates in a covalent cross-link: Glycyl lysine isopeptide (Lys-Gly) (interchain with G-Cter in SUMO2); alternate. Lys-81 carries the N6-acetyllysine modification. Arg-99 is a binding site for NAD(+). Substrate is bound at residue Arg-106. Lys-118 is modified (N6-acetyllysine; alternate). Lys-118 carries the post-translational modification N6-succinyllysine; alternate. Lys-126 carries the N6-acetyllysine modification. An NAD(+)-binding site is contributed by Asn-138. Asn-138 and Arg-169 together coordinate substrate. His-193 (proton acceptor) is an active-site residue. N6-acetyllysine is present on residues Lys-224 and Lys-232. The residue at position 239 (Tyr-239) is a Phosphotyrosine. Lys-243 carries the post-translational modification N6-acetyllysine. Thr-248 is a binding site for substrate. Thr-309 is subject to Phosphothreonine. Lys-318 carries the N6-acetyllysine; alternate modification. An N6-succinyllysine; alternate modification is found at Lys-318. At Thr-322 the chain carries Phosphothreonine.

The protein belongs to the LDH/MDH superfamily. LDH family. Homotetramer. Interacts with PTEN upstream reading frame protein MP31. Post-translationally, ISGylated.

It localises to the cytoplasm. The catalysed reaction is (S)-lactate + NAD(+) = pyruvate + NADH + H(+). It participates in fermentation; pyruvate fermentation to lactate; (S)-lactate from pyruvate: step 1/1. Functionally, interconverts simultaneously and stereospecifically pyruvate and lactate with concomitant interconversion of NADH and NAD(+). This chain is L-lactate dehydrogenase A chain (Ldha), found in Mus musculus (Mouse).